The chain runs to 346 residues: Tryptophan--tRNA ligase (346 aa).

ATP is bound by residues 11-13 and 19-20; these read RPT and GH. The 'HIGH' region motif lies at 12-20; sequence PTGKLHLGH. D143 contributes to the L-tryptophan binding site. ATP-binding positions include 155 to 157, L193, and 201 to 205; these read GKD and KMSKS. Residues 201–205 carry the 'KMSKS' region motif; sequence KMSKS.

This sequence belongs to the class-I aminoacyl-tRNA synthetase family. Homodimer.

It is found in the cytoplasm. The catalysed reaction is tRNA(Trp) + L-tryptophan + ATP = L-tryptophyl-tRNA(Trp) + AMP + diphosphate + H(+). In terms of biological role, catalyzes the attachment of tryptophan to tRNA(Trp). The sequence is that of Tryptophan--tRNA ligase from Chlamydia muridarum (strain MoPn / Nigg).